Reading from the N-terminus, the 344-residue chain is Small ribosomal subunit biogenesis GTPase RsgA (344 aa).

The 169-residue stretch at 100-268 (KNELSRPDYY…LIDSPGIREF (169 aa)) folds into the CP-type G domain. Residues 156–159 (NKID) and 210–218 (GQSGVGKSS) each bind GTP. The Zn(2+) site is built by Cys292, Cys297, His299, and Cys305.

Belongs to the TRAFAC class YlqF/YawG GTPase family. RsgA subfamily. Monomer. Associates with 30S ribosomal subunit, binds 16S rRNA. Requires Zn(2+) as cofactor.

Its subcellular location is the cytoplasm. In terms of biological role, one of several proteins that assist in the late maturation steps of the functional core of the 30S ribosomal subunit. Helps release RbfA from mature subunits. May play a role in the assembly of ribosomal proteins into the subunit. Circularly permuted GTPase that catalyzes slow GTP hydrolysis, GTPase activity is stimulated by the 30S ribosomal subunit. The protein is Small ribosomal subunit biogenesis GTPase RsgA of Actinobacillus pleuropneumoniae serotype 5b (strain L20).